A 356-amino-acid chain; its full sequence is tRNA-specific 2-thiouridylase MnmA 1 (356 aa).

Residues 8–15 and Met34 contribute to the ATP site; that span reads GMSGGVDS. The active-site Nucleophile is the Cys103. Cysteines 103 and 199 form a disulfide. Gly127 serves as a coordination point for ATP. An interaction with tRNA region spans residues 149–151; sequence KDQ. Cys199 acts as the Cysteine persulfide intermediate in catalysis. Residues 305–306 form an interaction with tRNA region; it reads RY.

This sequence belongs to the MnmA/TRMU family.

It is found in the cytoplasm. It carries out the reaction S-sulfanyl-L-cysteinyl-[protein] + uridine(34) in tRNA + AH2 + ATP = 2-thiouridine(34) in tRNA + L-cysteinyl-[protein] + A + AMP + diphosphate + H(+). Its function is as follows. Catalyzes the 2-thiolation of uridine at the wobble position (U34) of tRNA, leading to the formation of s(2)U34. This is tRNA-specific 2-thiouridylase MnmA 1 from Clostridium botulinum (strain ATCC 19397 / Type A).